The following is a 470-amino-acid chain: 6-phospho-beta-galactosidase 1 (470 aa).

D-galactose 6-phosphate contacts are provided by Gln-23, His-120, Asn-163, Glu-164, and Asn-300. Glu-164 functions as the Proton donor in the catalytic mechanism. Catalysis depends on Glu-378, which acts as the Nucleophile. D-galactose 6-phosphate-binding residues include Ser-434, Trp-435, Lys-441, and Tyr-443.

The protein belongs to the glycosyl hydrolase 1 family.

It catalyses the reaction a 6-phospho-beta-D-galactoside + H2O = D-galactose 6-phosphate + an alcohol. The protein operates within carbohydrate metabolism; lactose degradation; D-galactose 6-phosphate and beta-D-glucose from lactose 6-phosphate: step 1/1. The protein is 6-phospho-beta-galactosidase 1 of Streptococcus pneumoniae (strain ATCC BAA-255 / R6).